The sequence spans 113 residues: Photosystem II reaction center Psb28 protein (113 aa).

This sequence belongs to the Psb28 family. In terms of assembly, part of the photosystem II complex.

The protein resides in the cellular thylakoid membrane. In Nostoc punctiforme (strain ATCC 29133 / PCC 73102), this protein is Photosystem II reaction center Psb28 protein.